The chain runs to 309 residues: Taste receptor type 2 member 64 (309 aa).

Topologically, residues 1-3 (MVY) are extracellular. Residues 4-26 (FLLIILSILVVFAFVLGNFSNGF) traverse the membrane as a helical segment. The Cytoplasmic portion of the chain corresponds to 27 to 46 (VALVNVIDWVKTRKISSADQ). Residues 47 to 69 (ILTALVVSRIGLLWVILFHWYAN) form a helical membrane-spanning segment. Over 70-83 (VFNSALYSSEVGAV) the chain is Extracellular. A helical transmembrane segment spans residues 84 to 106 (ASNISAIINHFSIWLAASLGIFY). Residues 107-126 (LLKIANFSNLIFLHLKKRIR) lie on the Cytoplasmic side of the membrane. Residues 127–149 (SVVLVILLGPLVFLICNLAVITM) form a helical membrane-spanning segment. Residues 150 to 176 (DERVWTKEYEGNVTWKIKLRNAIHLSD) are Extracellular-facing. A glycan (N-linked (GlcNAc...) asparagine) is linked at asparagine 161. A helical membrane pass occupies residues 177–199 (LTVSTLANLIPFILTLICFLLLI). At 200-230 (CSLHKHLKKMQLHGKGSQDLSTKVHIKALQT) the chain is on the cytoplasmic side. A helical membrane pass occupies residues 231–253 (VISFLMLYAIYFLYLITLTWNLW). Topologically, residues 254 to 258 (TQQNK) are extracellular. The helical transmembrane segment at 259 to 281 (LVFLLCQTLGIMYPSFHSFFLIM) threads the bilayer. Residues 282–309 (GSRKLKQTFLSVLCQVTCLVKGQQPSTP) are Cytoplasmic-facing.

The protein belongs to the G-protein coupled receptor T2R family.

The protein localises to the membrane. Its function is as follows. Receptor that may play a role in the perception of bitterness and is gustducin-linked. May play a role in sensing the chemical composition of the gastrointestinal content. The activity of this receptor may stimulate alpha gustducin, mediate PLC-beta-2 activation and lead to the gating of TRPM5. The sequence is that of Taste receptor type 2 member 64 (TAS2R64) from Pan paniscus (Pygmy chimpanzee).